Here is a 144-residue protein sequence, read N- to C-terminus: Ethylene-responsive transcription factor ERF019 (144 aa).

Residues 13-72 constitute a DNA-binding region (AP2/ERF); sequence KYKGIRRRKWGKWVSEIRVPGTRDRLWLGSFSTAEGAAVAHDVAFFCLHQPDSLESLNFP.

Belongs to the AP2/ERF transcription factor family. ERF subfamily.

The protein resides in the nucleus. In terms of biological role, probably acts as a transcriptional activator. Binds to the GCC-box pathogenesis-related promoter element. May be involved in the regulation of gene expression by stress factors and by components of stress signal transduction pathways. This is Ethylene-responsive transcription factor ERF019 (ERF019) from Arabidopsis thaliana (Mouse-ear cress).